A 236-amino-acid polypeptide reads, in one-letter code: Small ribosomal subunit protein uS2c (236 aa).

It belongs to the universal ribosomal protein uS2 family.

It is found in the plastid. It localises to the chloroplast. The chain is Small ribosomal subunit protein uS2c (rps2) from Cucumis sativus (Cucumber).